Here is a 504-residue protein sequence, read N- to C-terminus: MVAPGSVRSRLGAVFPFLLVLVDLQYEGAECGVNADVEKHLELGKKLLAAGQLADALSQFHAAVDGDPDNYIAYYRRATVFLAMGKSKAALPDLTRVIELKMDFTAARLQRGHLLLKQGRLAEAEDDFKKVLKSNPSENEEKEAQSQLVKADEMQRLRAQALDAFDSADYTAAITFLDEILEVCVWDAELRELRAECFIKEGEPRKAISDLKAASKLKNDNTEAFYKISILYYQLGDHELSLSEVRECLKLDQDHKRCFAHYKQVKKLNKLIGSAEELIRDGRYTDATSKYESVMKAEPSVAEYTVRSKERICHCFSKDEKPVEAIKICSEVLQLEPDNVNALKDRAEAYLIEEMYDEAIQDYEAAQEQNENDQQIREGLEKAQRLLKQSQKRDYYKILGVKRNAKKQEIIKAYRKLALQWHPDNFQSEEEKKKAEKKFIDIAAAKEVLSDPEMRRKFDDGEDPLDAETQQGGGSNPFHRSWDSWQGFNPFSSGGPFRFKFHFN.

The N-terminal stretch at 1-31 is a signal peptide; it reads MVAPGSVRSRLGAVFPFLLVLVDLQYEGAEC. 9 TPR repeats span residues 37 to 70, 72 to 104, 105 to 138, 154 to 187, 188 to 221, 222 to 255, 268 to 301, 306 to 339, and 340 to 373; these read VEKHLELGKKLLAAGQLADALSQFHAAVDGDPDN, IAYYRRATVFLAMGKSKAALPDLTRVIELKMDF, TAARLQRGHLLLKQGRLAEAEDDFKKVLKSNPSE, MQRLRAQALDAFDSADYTAAITFLDEILEVCVWD, AELRELRAECFIKEGEPRKAISDLKAASKLKNDN, TEAFYKISILYYQLGDHELSLSEVRECLKLDQDH, LNKLIGSAEELIRDGRYTDATSKYESVMKAEPSV, VRSKERICHCFSKDEKPVEAIKICSEVLQLEPDN, and VNALKDRAEAYLIEEMYDEAIQDYEAAQEQNEND. A disulfide bond links C248 and C258. A Phosphoserine modification is found at S274. C313 and C329 are joined by a disulfide. The tract at residues 375-393 is flexible linker; that stretch reads QIREGLEKAQRLLKQSQKR. The region spanning 394 to 462 is the J domain; sequence DYYKILGVKR…EMRRKFDDGE (69 aa). A disordered region spans residues 451–481; it reads DPEMRRKFDDGEDPLDAETQQGGGSNPFHRS. Position 475 is a phosphoserine (S475).

As to quaternary structure, interacts with EIF2AK2 and EIF2AK3. Forms a trimeric complex with DNAJB1 and HSPA8. Interacts with THAP12.

It is found in the endoplasmic reticulum. Its function is as follows. Involved in the unfolded protein response (UPR) during ER stress. Co-chaperone of HSPA8/HSC70, it stimulates its ATPase activity. May inhibit both the autophosphorylation of EIF2AK2/PKR and the ability of EIF2AK2 to catalyze phosphorylation of the EIF2A. May inhibit EIF2AK3/PERK activity. The protein is DnaJ homolog subfamily C member 3 (Dnajc3) of Rattus norvegicus (Rat).